A 515-amino-acid polypeptide reads, in one-letter code: MAQARRPLMLIILDGWGYREVEEGNAVLSAGTPNLDRLVKDYPWCLLEASGGAVGLPEGMMGNSEDGHLNIGAGRIVYQNLTRINISIRNGDFFKNPVFLNAISKVKANDSSLHLIGLVSCGGVHSYTPHLHALIKLAKEKGLKKVYIHAFLDGRDVPPKTALGDIKKLNEFCKEHGGAKIATVSGRYYAMDRDKRWDRTKLAYDVLTLGASQYKAPNAETAVSEAYGRGETDEFVKPTVITDHEEKPVATIRDKDSVIFFNFRADRARQLTWAFVKDDFDGFVREKRPKIYFVCMARYDEDLDLPVAFPHEELKNVLGEVLSKQGLTQLRIAETEKYAHVTFFLNGGEEKRYEGEDRCLIPSPKIATYDLKPEMSAYKITDEVVRRIQSGKYDVIVLNFANMDMVGHTGIFEAAVKAVEAVDKCIGRIVEALKEIGGVALITADHGNAEQMIDSKTGEPHTAHTSNPVRCIYFGNGEVKALKKGKLCDLAPTLLELIGIPKPQEMTGKSLLVKE.

Mn(2+) contacts are provided by Asp14 and Ser64. The Phosphoserine intermediate role is filled by Ser64. Residues His125, 155–156 (RD), Arg187, Arg193, 264–267 (RADR), and Lys337 contribute to the substrate site. Residues Asp404, His408, Asp445, His446, and His464 each coordinate Mn(2+).

Belongs to the BPG-independent phosphoglycerate mutase family. It depends on Mn(2+) as a cofactor.

The catalysed reaction is (2R)-2-phosphoglycerate = (2R)-3-phosphoglycerate. It participates in carbohydrate degradation; glycolysis; pyruvate from D-glyceraldehyde 3-phosphate: step 3/5. In terms of biological role, catalyzes the interconversion of 2-phosphoglycerate and 3-phosphoglycerate. The protein is 2,3-bisphosphoglycerate-independent phosphoglycerate mutase 1 of Methanosarcina acetivorans (strain ATCC 35395 / DSM 2834 / JCM 12185 / C2A).